Reading from the N-terminus, the 248-residue chain is Granzyme-like protein 2 (248 aa).

The first 18 residues, 1–18 (MFLFLIFLVAVLPVNTEG), serve as a signal peptide directing secretion. Positions 19–20 (GE) are cleaved as a propeptide — activation peptide. The region spanning 21 to 243 (IVWGTESKPH…FIPWIQKTMK (223 aa)) is the Peptidase S1 domain. Residues C50 and C66 are joined by a disulfide bond. Residues H65 and D108 each act as charge relay system in the active site. Cystine bridges form between C142/C207 and C172/C186. N-linked (GlcNAc...) asparagine glycans are attached at residues N152 and N180. The Charge relay system role is filled by S201.

It belongs to the peptidase S1 family. Granzyme subfamily. In terms of tissue distribution, duodenum, lung and spleen.

In terms of biological role, this enzyme is necessary for target cell lysis in cell-mediated immune responses. In Rattus norvegicus (Rat), this protein is Granzyme-like protein 2.